We begin with the raw amino-acid sequence, 225 residues long: Insulin-induced gene 2 protein (225 aa).

Topologically, residues 1 to 28 (MAEGETKSPGPKKCGPYISSVTSQSVNL) are cytoplasmic. The helical transmembrane segment at 29 to 51 (MIRGVVLFFIGVFLALVLNLLQI) threads the bilayer. Topologically, residues 52-70 (QRNVTLFPPDVIASIFSSA) are lumenal. The helical transmembrane segment at 71 to 88 (WWVPPCCGTASAVIGLLY) threads the bilayer. Topologically, residues 89 to 103 (PCIDRHLGEPHKFKR) are cytoplasmic. The helical transmembrane segment at 104–126 (EWSSVMRCVAVFVGINHASAKVD) threads the bilayer. Topologically, residues 127 to 129 (FDN) are lumenal. A helical transmembrane segment spans residues 130–148 (NIQLSLTLAALSIGLWWTF). The Cytoplasmic segment spans residues 149–153 (DRSRS). Phosphoserine is present on Ser151. A helical transmembrane segment spans residues 154 to 175 (GFGLGVGIAFLATLVTQLLVYN). Residues 176–189 (GVYQYTSPDFLYVR) are Lumenal-facing. Residues 190–207 (SWLPCIFFAGGITMGNIG) traverse the membrane as a helical segment. The Cytoplasmic segment spans residues 208 to 225 (RQLAMYECKVIAEKSHQE). Cys215 is subject to Cysteine sulfenic acid (-SOH); alternate. A Glycyl cysteine thioester (Cys-Gly) (interchain with G-Cter in ubiquitin); alternate cross-link involves residue Cys215. The short motif at 219 to 225 (AEKSHQE) is the KxHxx element.

Belongs to the INSIG family. As to quaternary structure, interacts with SCAP; interaction is direct and only takes place in the presence of sterols; it prevents interaction between SCAP and the coat protein complex II (COPII). Associates with the SCAP-SREBP complex (composed of SCAP and SREBF1/SREBP1 or SREBF2/SREBP2); association is mediated via its interaction with SCAP and only takes place in the presence of sterols. Interacts with RNF139. Interacts with RNF145. In terms of processing, phosphorylation at Ser-151 by PCK1 reduces binding to oxysterol, disrupting the interaction between INSIG2 and SCAP, thereby promoting nuclear translocation of SREBP proteins (SREBF1/SREBP1 or SREBF2/SREBP2) and subsequent transcription of downstream lipogenesis-related genes. Polyubiquitinated by AMFR/gp78 at Cys-215 in some tissues such as adipose tissues, undifferentiated myoblasts and liver, leading to its degradation. In differentiated myotubes, Cys-215 oxidation prevents ubiquitination at the same site, resulting in protein stabilization. Post-translationally, oxidized at Cys-215 in differentiated myotubes, preventing ubiquitination at the same site, and resulting in protein stabilization.

It localises to the endoplasmic reticulum membrane. Its function is as follows. Oxysterol-binding protein that mediates feedback control of cholesterol synthesis by controlling both endoplasmic reticulum to Golgi transport of SCAP and degradation of HMGCR. Acts as a negative regulator of cholesterol biosynthesis by mediating the retention of the SCAP-SREBP complex in the endoplasmic reticulum, thereby blocking the processing of sterol regulatory element-binding proteins (SREBPs) SREBF1/SREBP1 and SREBF2/SREBP2. Binds oxysterol, including 22-hydroxycholesterol, 24-hydroxycholesterol, 25-hydroxycholesterol and 27-hydroxycholesterol, regulating interaction with SCAP and retention of the SCAP-SREBP complex in the endoplasmic reticulum. In presence of oxysterol, interacts with SCAP, retaining the SCAP-SREBP complex in the endoplasmic reticulum, thereby preventing SCAP from escorting SREBF1/SREBP1 and SREBF2/SREBP2 to the Golgi. Sterol deprivation or phosphorylation by PCK1 reduce oxysterol-binding, disrupting the interaction between INSIG2 and SCAP, thereby promoting Golgi transport of the SCAP-SREBP complex, followed by processing and nuclear translocation of SREBF1/SREBP1 and SREBF2/SREBP2. Also regulates cholesterol synthesis by regulating degradation of HMGCR: initiates the sterol-mediated ubiquitin-mediated endoplasmic reticulum-associated degradation (ERAD) of HMGCR via recruitment of the reductase to the ubiquitin ligase RNF139. The chain is Insulin-induced gene 2 protein from Sus scrofa (Pig).